We begin with the raw amino-acid sequence, 1450 residues long: M-protein, striated muscle (1450 aa).

A disordered region spans residues 66-87 (AHEAMQESRKRTHEQKSHASDE). Ig-like C2-type domains are found at residues 142–233 (PEIL…CAVV) and 254–359 (PLSY…AFLF). Fibronectin type-III domains lie at 373–468 (APMD…ALDP), 501–596 (PPTN…PQDI), 602–695 (APGR…VQAA), 698–800 (CPSY…TMPE), and 803–900 (PAYD…ASPG). Ig-like C2-type domains are found at residues 899-995 (PGTK…LMTL), 1002-1115 (PTIP…FLRK), 1118-1204 (PHFS…LELS), 1225-1322 (PLKI…QRLK), and 1333-1422 (KVIG…VTVS).

Expressed in pectoralis and cardiac muscle.

Is a structural constituent of myofibrillar M-band in striated muscle. This chain is M-protein, striated muscle, found in Gallus gallus (Chicken).